The primary structure comprises 331 residues: Septin homolog spn2 (331 aa).

The Septin-type G domain occupies 29 to 301 (RGFQFNVMVV…EKFRFKQLSS (273 aa)). The G1 motif stretch occupies residues 39 to 46 (GPSGSGKS). Residues 39–46 (GPSGSGKS), T73, G99, 179–187 (KSDSLTLEE), G235, and R250 each bind GTP. Residues 96–99 (DTPG) form a G3 motif region. A G4 motif region spans residues 178–181 (AKSD). Residues 311–331 (RMGSPAPVYPSEPHLHTATAQ) form a disordered region.

Belongs to the TRAFAC class TrmE-Era-EngA-EngB-Septin-like GTPase superfamily. Septin GTPase family. As to quaternary structure, component of the septin complex composed of two copies of each spn1, spn2, spn3 and spn4. Component of the sporulation-specific septin complex composed of at least spn2, spn5, spn6 and spn7.

It is found in the cytoplasm. The protein resides in the cell cortex. The protein localises to the forespore membrane. Functionally, plays a role in the cell cycle. Involved in a late stage of septum formation leading to the separation of the daughter cells. Involved in the correct orientation of forespore membrane extension during sporulation. Binds phosphatidylinositol 4-phosphate. In Schizosaccharomyces pombe (strain 972 / ATCC 24843) (Fission yeast), this protein is Septin homolog spn2 (spn2).